A 267-amino-acid polypeptide reads, in one-letter code: MGKLMAPKILVTNDDGVYSTGLKAAFDSVSDLGEVTISAPAVQQSGVGRSISIFEPLRITKTNAGGIPAYSVGGTPTDAVILGIFTILKEMPDLVLSGFNIGENISTDTITTSGTIGGALEAASYGVPAIAASMQVLDEGQKFDDPRDYHRERFEAGIKVVNRVAQNVLNYGMPENVDLLNINIPYHAEEDTPIEITRLARKIFKTDVEERRDPRGRPYYWIAGDLIREEEEGTDVHAIMQKGHVSITPISLDSTARIEFSEIEKYL.

4 residues coordinate a divalent metal cation: Asp14, Asp15, Ser45, and Asn100.

This sequence belongs to the SurE nucleotidase family. A divalent metal cation is required as a cofactor.

The protein resides in the cytoplasm. The catalysed reaction is a ribonucleoside 5'-phosphate + H2O = a ribonucleoside + phosphate. Its function is as follows. Nucleotidase that shows phosphatase activity on nucleoside 5'-monophosphates. This chain is 5'-nucleotidase SurE, found in Methanosarcina barkeri (strain Fusaro / DSM 804).